Reading from the N-terminus, the 346-residue chain is Phenylalanine--tRNA ligase alpha subunit (346 aa).

Glu261 lines the Mg(2+) pocket.

This sequence belongs to the class-II aminoacyl-tRNA synthetase family. Phe-tRNA synthetase alpha subunit type 1 subfamily. In terms of assembly, tetramer of two alpha and two beta subunits. Mg(2+) is required as a cofactor.

The protein resides in the cytoplasm. The catalysed reaction is tRNA(Phe) + L-phenylalanine + ATP = L-phenylalanyl-tRNA(Phe) + AMP + diphosphate + H(+). This Streptococcus agalactiae serotype III (strain NEM316) protein is Phenylalanine--tRNA ligase alpha subunit.